The sequence spans 362 residues: G-protein coupled receptor 6 (362 aa).

Residues 1 to 74 (MNASAASLND…PGLLLPAVNP (74 aa)) lie on the Extracellular side of the membrane. Residues N2, N9, and N51 are each glycosylated (N-linked (GlcNAc...) asparagine). A helical transmembrane segment spans residues 75–94 (WDVLLCVSGTVIAGENALVV). The Cytoplasmic segment spans residues 95–106 (ALIASTPALRTP). The chain crosses the membrane as a helical span at residues 107-130 (MFVLVGSLATADLLAGCGLILHFV). Residues 131–142 (FQYLVPSETVSL) are Extracellular-facing. The chain crosses the membrane as a helical span at residues 143 to 164 (LTVGFLVASFAASVSSLLAITV). Residues 165–185 (DRYLSLYNALTYYSRRTLLGV) lie on the Cytoplasmic side of the membrane. A helical transmembrane segment spans residues 186–205 (HLLLAATWTVSLGLGLLPVL). At 206–230 (GWNCLAERAACSVVRPLARSHVALL) the chain is on the extracellular side. A helical transmembrane segment spans residues 231-249 (SAAFFMVFGIMLHLYVRIC). Topologically, residues 250-277 (QVVWRHAHQIALQQHCLAPPHLAATRKG) are cytoplasmic. The helical transmembrane segment at 278–304 (VGTLAVVLGTFGASWLPFAIYCVVGSH) threads the bilayer. Residues 305-309 (EDPAV) lie on the Extracellular side of the membrane. Residues 310–331 (YTYATLLPATYNSMINPIIYAF) form a helical membrane-spanning segment. Topologically, residues 332–362 (RNQEIQRALWLLLCGCFQSKVPFRSRSPSEV) are cytoplasmic. Residue C345 is the site of S-palmitoyl cysteine attachment. 3 positions are modified to phosphoserine: S356, S358, and S360.

It belongs to the G-protein coupled receptor 1 family.

The protein localises to the cell membrane. In terms of biological role, orphan receptor with constitutive G(s) signaling activity that activate cyclic AMP. Promotes neurite outgrowth and blocks myelin inhibition in neurons. The protein is G-protein coupled receptor 6 (GPR6) of Homo sapiens (Human).